The following is a 440-amino-acid chain: MESQQLSQHSHISHGSACASVTSKEVHTNQDPLDVSASKTEECEKASTKANSQQTTTPASSAVPENPHHASPQPASVPPPQNGPYPQQCMMTQNQANPSGWSFYGHPSMIPYTPYQMSPMYFPPGPQSQFPQYPSSVGTPLSTPSPESGNTFTDSSSADSDMTSTKKYVRPPPMLTSPNDFPNWVKTYIKFLQNSNLGGIIPTVNGKPVRQITDDELTFLYNTFQIFAPSQFLPTWVKDILSVDYTDIMKILSKSIEKMQSDTQEANDIVTLANLQYNGSTPADAFETKVTNIIDRLNNNGIHINNKVACQLIMRGLSGEYKFLRYTRHRHLNMTVAELFLDIHAIYEEQQGSRNSKPNYRRNLSDEKNDSRSYTNTTKPKVIARNPQKTNNSKSKTARAHNVSTSNNSPSTDNDSISKSTTEPIQLNNKHDLHLRPGTY.

The span at 1–16 shows a compositional bias: low complexity; the sequence is MESQQLSQHSHISHGS. Disordered regions lie at residues 1–93, 126–173, and 352–440; these read MESQ…MMTQ, PQSQ…RPPP, and GSRN…PGTY. Polar residues-rich tracts occupy residues 48–60 and 127–152; these read TKAN…TPAS and QSQF…GNTF. Residues 153–165 show a composition bias toward low complexity; it reads TDSSSADSDMTST. Positions 299-401 are RNA-binding; sequence NNGIHINNKV…NSKSKTARAH (103 aa). Positions 402 to 418 are enriched in low complexity; it reads NVSTSNNSPSTDNDSIS. The residue at position 416 (S416) is a Phosphoserine. The span at 419-428 shows a compositional bias: polar residues; the sequence is KSTTEPIQLN. Over residues 429–440 the composition is skewed to basic and acidic residues; sequence NKHDLHLRPGTY.

As to quaternary structure, homotrimer.

The protein resides in the cytoplasm. Capsid protein (CA) is the structural component of the virus-like particle (VLP), forming the shell that encapsulates the retrotransposons dimeric RNA genome. The particles are assembled from trimer-clustered units and there are holes in the capsid shells that allow for the diffusion of macromolecules. CA also has nucleocapsid-like chaperone activity, promoting primer tRNA(i)-Met annealing to the multipartite primer-binding site (PBS), dimerization of Ty1 RNA and initiation of reverse transcription. This is Transposon Ty1-JR1 Gag polyprotein (TY1A-JR1) from Saccharomyces cerevisiae (strain ATCC 204508 / S288c) (Baker's yeast).